The sequence spans 685 residues: Protein arginine N-methyltransferase 7 (685 aa).

SAM-dependent MTase PRMT-type domains lie at 14–355 and 364–685; these read QATW…YSLW and AESI…LKSI.

It belongs to the class I-like SAM-binding methyltransferase superfamily. Protein arginine N-methyltransferase family. PRMT7 subfamily.

Essential arginine methyltransferase that can both catalyze the formation of omega-N monomethylarginine (MMA) and symmetrical dimethylarginine (sDMA). Specifically mediates the symmetrical dimethylation of arginine residues in the small nuclear ribonucleoproteins SmD1 and SmD3. In Drosophila willistoni (Fruit fly), this protein is Protein arginine N-methyltransferase 7 (Art7).